We begin with the raw amino-acid sequence, 538 residues long: Syncytin-2 (538 aa).

The signal sequence occupies residues 1 to 15 (MGLLLLVLILTPLLA). Residues 31–478 (LLQSTGSPYS…GWLNWEGTWK (448 aa)) lie on the Extracellular side of the membrane. Positions 43-46 (CWLC) match the CXXC motif. 3 cysteine pairs are disulfide-bonded: Cys-43/Cys-46, Cys-43/Cys-439, and Cys-431/Cys-438. Residues Asn-133, Asn-146, Asn-177, Asn-220, Asn-241, Asn-247, Asn-312, and Asn-332 are each glycosylated (N-linked (GlcNAc...) asparagine). The interval 354-374 (FIPLLAGLGILAGTGTGIAGI) is fusion peptide. The CKS-17 signature appears at 414–430 (LQNRRGLDMLTAAQGGI). A CX6CC motif is present at residues 431 to 439 (CLALDEKCC). N-linked (GlcNAc...) asparagine glycosylation occurs at Asn-443. A helical transmembrane segment spans residues 479 to 499 (WFSWVLPFIGPFVSLLLLLLF). Residues 500 to 538 (GPCLLNLITQFVSSRLQAIKLQTNLSAGRRPRTIQESPF) are Cytoplasmic-facing.

Belongs to the gamma type-C retroviral envelope protein family. HERV class-I FRD env subfamily. The surface and transmembrane proteins form a heterodimer. They are attached by non-covalent interactions or by a labile interchain disulfide bond. In terms of processing, specific enzymatic cleavages in vivo yield the mature SU and TM proteins. Post-translationally, the CXXC motif is highly conserved across a broad range of retroviral envelope proteins. It is thought to participate in the formation of a labile disulfide bond possibly with the CX6CC motif present in the transmembrane protein.

It is found in the cell membrane. Its function is as follows. This endogenous retroviral envelope protein has retained its original fusogenic properties and participates in trophoblast fusion and the formation of a syncytium during placenta morphogenesis. The interaction with MFSD2A is apparently important for this process. Endogenous envelope proteins may have kept, lost or modified their original function during evolution and this one is unable to confer infectivity. The polypeptide is Syncytin-2 (ERVFRD-1) (Hylobates moloch (Silvery gibbon)).